The chain runs to 150 residues: Putative biopolymer transport protein ExbB-like 2 (150 aa).

The next 3 membrane-spanning stretches (helical) occupy residues 5 to 25, 63 to 83, and 97 to 117; these read VDYG…AIAI, APYI…MDLG, and LALA…AIVI.

Belongs to the ExbB/TolQ family.

The protein localises to the cell inner membrane. This is Putative biopolymer transport protein ExbB-like 2 from Helicobacter pylori (strain ATCC 700392 / 26695) (Campylobacter pylori).